The sequence spans 459 residues: Cysteine desulfurase (459 aa).

The N-terminal 17 residues, 1–17 (MVGSVAGNMLLRAAWRR), are a transit peptide targeting the mitochondrion. Positions 129, 130, 237, 257, and 259 each coordinate pyridoxal 5'-phosphate. Lys260 bears the N6-(pyridoxal phosphate)lysine mark. Thr297 is a binding site for pyridoxal 5'-phosphate. Cys383 functions as the Cysteine persulfide intermediate in the catalytic mechanism. [2Fe-2S] cluster is bound at residue Cys383. Cys383 contacts Zn(2+). A Cysteine persulfide modification is found at Cys383.

This sequence belongs to the class-V pyridoxal-phosphate-dependent aminotransferase family. NifS/IscS subfamily. In terms of assembly, homodimer. Component of the mitochondrial core iron-sulfur cluster (ISC) complex composed of NFS1, LYRM4, NDUFAB1, ISCU, FXN, and FDX2; this complex is a heterohexamer containing two copies of each monomer. Component of cyteine desulfurase complex composed of NFS1, LYRM4 and NDUFAB1; this complex contributes to the activation of cysteine desulfurase activity and NFS1 stabilization. Interacts (homodimer form) with ISCU (D-state); each monomer interacts with the C-terminal regions of each NFS1 monomer. Interacts with HSPA9. Interacts (via homodimer form) with FDX2. Interacts (via homodimer form) with FXN. Interacts with LYRM4. Component of a complex composed of FXN, NFS1, LYRM4 and ISCU. Pyridoxal 5'-phosphate serves as cofactor. N-gluconoylated. Post-translationally, cysteine persulfide intermediate is reduced by thiol-containing molecules like glutathione and L-cysteine. Persulfide reduction is a rate-limiting step of cysteine desulfurase catalytic cycle. In terms of tissue distribution, ubiquitous.

It is found in the mitochondrion. The enzyme catalyses (sulfur carrier)-H + L-cysteine = (sulfur carrier)-SH + L-alanine. The catalysed reaction is L-cysteinyl-[cysteine desulfurase] + L-cysteine = S-sulfanyl-L-cysteinyl-[cysteine desulfurase] + L-alanine. Its activity is regulated as follows. Active only in complex with LYRM4. Functionally, mitochondrial cysteine desulfurase, of the core iron-sulfur cluster (ISC) assembly complex, that catalyzes the desulfuration of L-cysteine to L-alanine, as component of the cysteine desulfurase complex, leading to the formation of a cysteine persulfide intermediate at the active site cysteine residue and participates in the [2Fe-2S] clusters assembly on the scaffolding protein ISCU. The persulfide is then transferred on the flexible Cys loop from the catalytic site of NFS1 to the surface of NFS1. After the NFS1-linked persulfide sulfur is transferred to one of the conserved Cys residues of the scaffold, a reaction assisted by FXN. The core iron-sulfur cluster (ISC) assembly complex is involved in the de novo synthesis of a [2Fe-2S] cluster, the first step of the mitochondrial iron-sulfur protein biogenesis. This process is initiated by the cysteine desulfurase complex (NFS1:LYRM4:NDUFAB1) that produces persulfide which is delivered on the scaffold protein ISCU in a FXN-dependent manner. Then this complex is stabilized by FDX2 which provides reducing equivalents to accomplish the [2Fe-2S] cluster assembly. Finally, the [2Fe-2S] cluster is transferred from ISCU to chaperone proteins, including HSCB, HSPA9 and GLRX5. The sequence is that of Cysteine desulfurase from Mus musculus (Mouse).